The chain runs to 276 residues: Homeobox-leucine zipper protein HOX11 (276 aa).

The tract at residues 1–92 (MVDGHLEAST…DDGGSARKKL (92 aa)) is disordered. Residues 39-48 (LSSSPNNSAG) are compositionally biased toward polar residues. A compositionally biased stretch (gly residues) spans 58-73 (HGLGGNDAAPGGGGGD). A DNA-binding region (homeobox) is located at residues 87 to 146 (SARKKLRLSKEQSAFLEESFKEHSTLNPKQKLALAKQLNLRPRQVEVWFQNRRARTKLKQ). The segment at 145–189 (KQTEVDCEYLKRCCETLTEENRRLQKELAELRALKTVHPFYMHLP) is leucine-zipper. The interval 214–244 (AATSSTAAPPAAPSSGGIAATSSSSAAAAAA) is disordered.

This sequence belongs to the HD-ZIP homeobox family. Class II subfamily. As to expression, expressed in stems, leaf sheaths and blades and panicles.

It localises to the nucleus. Probable transcription factor. The chain is Homeobox-leucine zipper protein HOX11 (HOX11) from Oryza sativa subsp. indica (Rice).